A 103-amino-acid chain; its full sequence is Large ribosomal subunit protein bL21 (103 aa).

Belongs to the bacterial ribosomal protein bL21 family. In terms of assembly, part of the 50S ribosomal subunit. Contacts protein L20.

Its function is as follows. This protein binds to 23S rRNA in the presence of protein L20. The chain is Large ribosomal subunit protein bL21 from Pseudoalteromonas atlantica (strain T6c / ATCC BAA-1087).